Consider the following 180-residue polypeptide: ATP-dependent protease subunit HslV (180 aa).

The active site involves T8. Residues A165, C168, and T171 each contribute to the Na(+) site.

The protein belongs to the peptidase T1B family. HslV subfamily. A double ring-shaped homohexamer of HslV is capped on each side by a ring-shaped HslU homohexamer. The assembly of the HslU/HslV complex is dependent on binding of ATP.

It localises to the cytoplasm. The enzyme catalyses ATP-dependent cleavage of peptide bonds with broad specificity.. Allosterically activated by HslU binding. In terms of biological role, protease subunit of a proteasome-like degradation complex believed to be a general protein degrading machinery. In Staphylococcus epidermidis (strain ATCC 12228 / FDA PCI 1200), this protein is ATP-dependent protease subunit HslV.